We begin with the raw amino-acid sequence, 326 residues long: Small ribosomal subunit protein RACK1x (326 aa).

7 WD repeats span residues 13–53, 61–100, 103–142, 147–188, 191–230, 232–270, and 290–326; these read AHTD…KSYG, GHSH…TTRR, GHTK…KYTI, GHKE…LRNS, GHSG…KLYS, EAGS…VVED, and NQKK…IGRY.

It belongs to the WD repeat G protein beta family. Ribosomal protein RACK1 subfamily. As to quaternary structure, homodimer and heterodimer with RACK1A or RACK1B. Interacts with GB1, MEKK1, MKK4, MKK5, MPK3 and MPK6, but not with GPA1 or MPK4. Widely expressed.

Functionally, minor component of the RACK1 regulatory proteins that play a role in multiple signal transduction pathways. Involved in multiple hormone responses and developmental processes. MAPK cascade scaffolding protein involved in the protease IV and ArgC signaling pathway but not the flg22 pathway. The protein is Small ribosomal subunit protein RACK1x of Arabidopsis thaliana (Mouse-ear cress).